We begin with the raw amino-acid sequence, 355 residues long: 3-dehydroquinate synthase (355 aa).

NAD(+) is bound by residues E71–K76, G105–D109, T129–S130, K142, and K151. Zn(2+) is bound by residues E184, H246, and H263.

The protein belongs to the sugar phosphate cyclases superfamily. Dehydroquinate synthase family. Requires Co(2+) as cofactor. The cofactor is Zn(2+). NAD(+) serves as cofactor.

It is found in the cytoplasm. It catalyses the reaction 7-phospho-2-dehydro-3-deoxy-D-arabino-heptonate = 3-dehydroquinate + phosphate. It functions in the pathway metabolic intermediate biosynthesis; chorismate biosynthesis; chorismate from D-erythrose 4-phosphate and phosphoenolpyruvate: step 2/7. Catalyzes the conversion of 3-deoxy-D-arabino-heptulosonate 7-phosphate (DAHP) to dehydroquinate (DHQ). This is 3-dehydroquinate synthase from Streptococcus pneumoniae (strain 70585).